Consider the following 260-residue polypeptide: Carbonic anhydrase 3 (260 aa).

Ala2 bears the N-acetylalanine mark. In terms of domain architecture, Alpha-carbonic anhydrase spans 3-259 (KEWGYASHNG…IKGRVVRASF (257 aa)). Ser29, Ser43, Ser48, Ser50, and Ser55 each carry phosphoserine. The interval 64–67 (KTCR) is involved in proton transfer. Phosphothreonine is present on Thr73. Zn(2+) is bound by residues His94, His96, and His119. Position 127 is a phosphotyrosine (Tyr127). The residue at position 129 (Thr129) is a Phosphothreonine. S-glutathionyl cysteine is present on residues Cys182 and Cys187. 198 to 199 (TT) contributes to the substrate binding site. Thr216 is modified (phosphothreonine). Ser219 bears the Phosphoserine mark.

The protein belongs to the alpha-carbonic anhydrase family. Requires Zn(2+) as cofactor. Post-translationally, S-thiolated both by thiol-disulfide exchange with glutathione disulfide and by oxyradical-initiated S-thiolation with reduced glutathione. S-glutathionylated in hepatocytes under oxidative stress. In terms of tissue distribution, expressed in liver and muscle.

Its subcellular location is the cytoplasm. It carries out the reaction hydrogencarbonate + H(+) = CO2 + H2O. Inhibited by acetazolamide. Reversible hydration of carbon dioxide. The chain is Carbonic anhydrase 3 (Ca3) from Rattus norvegicus (Rat).